Consider the following 189-residue polypeptide: Selenoprotein S (189 aa).

Residues Ser28–Phe48 traverse the membrane as a helical segment. The interval Arg78 to Gln90 is VCP/p97-interacting motif (VIM). Positions Lys115–Gly189 are disordered. Residue Ser140 is modified to Phosphoserine. Over residues Arg159–Ala173 the composition is skewed to gly residues. Residue Sec188 is a non-standard amino acid, selenocysteine.

This sequence belongs to the selenoprotein S family. Interacts with DERL1 and (via VIM motif) with VCP, suggesting that it forms a membrane complex with DERL1 that serves as a receptor for VCP. Also interacts with DERL2, DERL3 and SELENOK. The SELENOK-SELENOS complex interacts with VCP. Interacts with CCDC47. Truncated SELENOS proteins produced by failed UGA/Sec decoding are ubiquitinated by the CRL2(KLHDC2) and CRL2(KLHDC3) complexes, which recognizes the glycine (Gly) at the C-terminus of truncated SELENOS proteins. Truncated SELENOS proteins produced by failed UGA/Sec decoding are also ubiquitinated by the CRL5(KLHDC1) complex.

It localises to the endoplasmic reticulum membrane. The protein localises to the cytoplasm. Its function is as follows. Involved in the degradation process of misfolded endoplasmic reticulum (ER) luminal proteins. Participates in the transfer of misfolded proteins from the ER to the cytosol, where they are destroyed by the proteasome in a ubiquitin-dependent manner. Probably acts by serving as a linker between DERL1, which mediates the retrotranslocation of misfolded proteins into the cytosol, and the ATPase complex VCP, which mediates the translocation and ubiquitination. The protein is Selenoprotein S of Homo sapiens (Human).